The following is a 425-amino-acid chain: Glutamyl-tRNA reductase (425 aa).

Substrate-binding positions include 49-52 (TCNR), serine 107, 112-114 (EPQ), and glutamine 118. Catalysis depends on cysteine 50, which acts as the Nucleophile. Residue 187–192 (GAGETI) participates in NADP(+) binding.

The protein belongs to the glutamyl-tRNA reductase family. Homodimer.

It catalyses the reaction (S)-4-amino-5-oxopentanoate + tRNA(Glu) + NADP(+) = L-glutamyl-tRNA(Glu) + NADPH + H(+). The protein operates within porphyrin-containing compound metabolism; protoporphyrin-IX biosynthesis; 5-aminolevulinate from L-glutamyl-tRNA(Glu): step 1/2. In terms of biological role, catalyzes the NADPH-dependent reduction of glutamyl-tRNA(Glu) to glutamate 1-semialdehyde (GSA). The sequence is that of Glutamyl-tRNA reductase from Pseudomonas putida (strain ATCC 700007 / DSM 6899 / JCM 31910 / BCRC 17059 / LMG 24140 / F1).